Here is a 376-residue protein sequence, read N- to C-terminus: UDP-N-acetylglucosamine--N-acetylmuramyl-(pentapeptide) pyrophosphoryl-undecaprenol N-acetylglucosamine transferase (376 aa).

Residues 12-14, N125, R165, S197, and Q296 each bind UDP-N-acetyl-alpha-D-glucosamine; that span reads TGG.

It belongs to the glycosyltransferase 28 family. MurG subfamily.

Its subcellular location is the cell inner membrane. The enzyme catalyses di-trans,octa-cis-undecaprenyl diphospho-N-acetyl-alpha-D-muramoyl-L-alanyl-D-glutamyl-meso-2,6-diaminopimeloyl-D-alanyl-D-alanine + UDP-N-acetyl-alpha-D-glucosamine = di-trans,octa-cis-undecaprenyl diphospho-[N-acetyl-alpha-D-glucosaminyl-(1-&gt;4)]-N-acetyl-alpha-D-muramoyl-L-alanyl-D-glutamyl-meso-2,6-diaminopimeloyl-D-alanyl-D-alanine + UDP + H(+). The protein operates within cell wall biogenesis; peptidoglycan biosynthesis. Its function is as follows. Cell wall formation. Catalyzes the transfer of a GlcNAc subunit on undecaprenyl-pyrophosphoryl-MurNAc-pentapeptide (lipid intermediate I) to form undecaprenyl-pyrophosphoryl-MurNAc-(pentapeptide)GlcNAc (lipid intermediate II). This is UDP-N-acetylglucosamine--N-acetylmuramyl-(pentapeptide) pyrophosphoryl-undecaprenol N-acetylglucosamine transferase from Protochlamydia amoebophila (strain UWE25).